A 325-amino-acid polypeptide reads, in one-letter code: 4-hydroxy-3-methylbut-2-enyl diphosphate reductase (325 aa).

C13 provides a ligand contact to [4Fe-4S] cluster. H42 and H76 together coordinate (2E)-4-hydroxy-3-methylbut-2-enyl diphosphate. Dimethylallyl diphosphate is bound by residues H42 and H76. Residues H42 and H76 each coordinate isopentenyl diphosphate. A [4Fe-4S] cluster-binding site is contributed by C98. Residue H126 participates in (2E)-4-hydroxy-3-methylbut-2-enyl diphosphate binding. H126 is a binding site for dimethylallyl diphosphate. Isopentenyl diphosphate is bound at residue H126. E128 functions as the Proton donor in the catalytic mechanism. T169 contacts (2E)-4-hydroxy-3-methylbut-2-enyl diphosphate. Residue C230 participates in [4Fe-4S] cluster binding. S258, S259, N260, and S306 together coordinate (2E)-4-hydroxy-3-methylbut-2-enyl diphosphate. 4 residues coordinate dimethylallyl diphosphate: S258, S259, N260, and S306. Isopentenyl diphosphate contacts are provided by S258, S259, N260, and S306.

The protein belongs to the IspH family. The cofactor is [4Fe-4S] cluster.

It carries out the reaction isopentenyl diphosphate + 2 oxidized [2Fe-2S]-[ferredoxin] + H2O = (2E)-4-hydroxy-3-methylbut-2-enyl diphosphate + 2 reduced [2Fe-2S]-[ferredoxin] + 2 H(+). It catalyses the reaction dimethylallyl diphosphate + 2 oxidized [2Fe-2S]-[ferredoxin] + H2O = (2E)-4-hydroxy-3-methylbut-2-enyl diphosphate + 2 reduced [2Fe-2S]-[ferredoxin] + 2 H(+). It functions in the pathway isoprenoid biosynthesis; dimethylallyl diphosphate biosynthesis; dimethylallyl diphosphate from (2E)-4-hydroxy-3-methylbutenyl diphosphate: step 1/1. It participates in isoprenoid biosynthesis; isopentenyl diphosphate biosynthesis via DXP pathway; isopentenyl diphosphate from 1-deoxy-D-xylulose 5-phosphate: step 6/6. Its function is as follows. Catalyzes the conversion of 1-hydroxy-2-methyl-2-(E)-butenyl 4-diphosphate (HMBPP) into a mixture of isopentenyl diphosphate (IPP) and dimethylallyl diphosphate (DMAPP). Acts in the terminal step of the DOXP/MEP pathway for isoprenoid precursor biosynthesis. The sequence is that of 4-hydroxy-3-methylbut-2-enyl diphosphate reductase from Prosthecochloris aestuarii (strain DSM 271 / SK 413).